Here is a 177-residue protein sequence, read N- to C-terminus: NADH-quinone oxidoreductase subunit B (177 aa).

Residues Cys56, Cys57, Cys121, and Cys151 each coordinate [4Fe-4S] cluster.

Belongs to the complex I 20 kDa subunit family. In terms of assembly, NDH-1 is composed of 14 different subunits. Subunits NuoB, C, D, E, F, and G constitute the peripheral sector of the complex. Requires [4Fe-4S] cluster as cofactor.

It is found in the cell inner membrane. The enzyme catalyses a quinone + NADH + 5 H(+)(in) = a quinol + NAD(+) + 4 H(+)(out). In terms of biological role, NDH-1 shuttles electrons from NADH, via FMN and iron-sulfur (Fe-S) centers, to quinones in the respiratory chain. Couples the redox reaction to proton translocation (for every two electrons transferred, four hydrogen ions are translocated across the cytoplasmic membrane), and thus conserves the redox energy in a proton gradient. The protein is NADH-quinone oxidoreductase subunit B of Ruegeria pomeroyi (strain ATCC 700808 / DSM 15171 / DSS-3) (Silicibacter pomeroyi).